Reading from the N-terminus, the 660-residue chain is Bifunctional polymyxin resistance protein ArnA (660 aa).

The formyltransferase ArnAFT stretch occupies residues 1-304 (MKTVVFAYHD…TLGLVQGSRL (304 aa)). 86 to 88 (HLI) provides a ligand contact to (6R)-10-formyltetrahydrofolate. Histidine 104 acts as the Proton donor; for formyltransferase activity in catalysis. (6R)-10-formyltetrahydrofolate-binding positions include arginine 114 and 136–140 (VKRAD). Positions 314 to 660 (RRTRVLILGV…RTVDLTDKPS (347 aa)) are dehydrogenase ArnADH. NAD(+)-binding positions include aspartate 347 and 368–369 (DI). Residues alanine 393, tyrosine 398, and 432 to 433 (TS) contribute to the UDP-alpha-D-glucuronate site. Glutamate 434 acts as the Proton acceptor; for decarboxylase activity in catalysis. UDP-alpha-D-glucuronate-binding positions include arginine 460, asparagine 492, 526–535 (KLIDGGKQKR), and tyrosine 613. The Proton donor; for decarboxylase activity role is filled by arginine 619.

It in the N-terminal section; belongs to the Fmt family. UDP-L-Ara4N formyltransferase subfamily. This sequence in the C-terminal section; belongs to the NAD(P)-dependent epimerase/dehydratase family. UDP-glucuronic acid decarboxylase subfamily. In terms of assembly, homohexamer, formed by a dimer of trimers.

It catalyses the reaction UDP-alpha-D-glucuronate + NAD(+) = UDP-beta-L-threo-pentopyranos-4-ulose + CO2 + NADH. It carries out the reaction UDP-4-amino-4-deoxy-beta-L-arabinose + (6R)-10-formyltetrahydrofolate = UDP-4-deoxy-4-formamido-beta-L-arabinose + (6S)-5,6,7,8-tetrahydrofolate + H(+). It participates in nucleotide-sugar biosynthesis; UDP-4-deoxy-4-formamido-beta-L-arabinose biosynthesis; UDP-4-deoxy-4-formamido-beta-L-arabinose from UDP-alpha-D-glucuronate: step 1/3. It functions in the pathway nucleotide-sugar biosynthesis; UDP-4-deoxy-4-formamido-beta-L-arabinose biosynthesis; UDP-4-deoxy-4-formamido-beta-L-arabinose from UDP-alpha-D-glucuronate: step 3/3. Its pathway is bacterial outer membrane biogenesis; lipopolysaccharide biosynthesis. Its function is as follows. Bifunctional enzyme that catalyzes the oxidative decarboxylation of UDP-glucuronic acid (UDP-GlcUA) to UDP-4-keto-arabinose (UDP-Ara4O) and the addition of a formyl group to UDP-4-amino-4-deoxy-L-arabinose (UDP-L-Ara4N) to form UDP-L-4-formamido-arabinose (UDP-L-Ara4FN). The modified arabinose is attached to lipid A and is required for resistance to polymyxin and cationic antimicrobial peptides. In Escherichia coli (strain SMS-3-5 / SECEC), this protein is Bifunctional polymyxin resistance protein ArnA.